The chain runs to 496 residues: MISRAAAPSSSIASLSSRSLRAQAPAARSFATVQDNAPPVKHYGGLKDQDRIFTNLYGHHGADLKSAMKYGDWHRTKDIVLKGHDWLISELKASGLRGRGGAGFPSGLKYSFMNFKDWDKDPRPRYLVVNADEGEPGTCKDREIMRKDPQKLIEGCLVVGRAMNANAAYMYIRGEFYQEATVLQRAINEAYEAGLIGKNACGTGYDFDVYIHRGMGAYVCGEETSLIESIEGKAGKPRLKPPFPAAVGLFGCPSTVTNVETVAVTPTIMRRGASWFSSFGRERNAGTKLFCISGHVNNPCTVEEEMSISLRDVIDRHCGGVRGGWDNLLAVIPGGSSTPVLPKTICDDQLMDFDALKDSQSGLGTAAVIVMDKSTDIVRAISRLSTFYKHESCGQCTPCREGSKWTMHMMQRMEKGQAREREIDMLQELTKQVEGHTICALGEAFAWPIQGLIRHFRPELEARIREYSKEVGGNGPYAGGWHPEARAEGKLISPGM.

The N-terminal 30 residues, 1 to 30, are a transit peptide targeting the mitochondrion; the sequence is MISRAAAPSSSIASLSSRSLRAQAPAARSF. 98–107 contacts NAD(+); the sequence is GRGGAGFPSG. Residue 214-261 coordinates FMN; that stretch reads GMGAYVCGEETSLIESIEGKAGKPRLKPPFPAAVGLFGCPSTVTNVET. Residues cysteine 393, cysteine 396, cysteine 399, and cysteine 439 each coordinate [4Fe-4S] cluster.

It belongs to the complex I 51 kDa subunit family. As to quaternary structure, complex I is composed of about 40 different subunits. This is a component of the flavoprotein-sulfur (FP) fragment of the enzyme. Requires FMN as cofactor. [4Fe-4S] cluster serves as cofactor.

It is found in the mitochondrion inner membrane. The catalysed reaction is a ubiquinone + NADH + 5 H(+)(in) = a ubiquinol + NAD(+) + 4 H(+)(out). Its function is as follows. Core subunit of the mitochondrial membrane respiratory chain NADH dehydrogenase (Complex I) that is believed to belong to the minimal assembly required for catalysis. Complex I functions in the transfer of electrons from NADH to the respiratory chain. The immediate electron acceptor for the enzyme is believed to be ubiquinone. The protein is NADH-ubiquinone oxidoreductase 51 kDa subunit, mitochondrial (NUO51) of Aspergillus niger.